The chain runs to 378 residues: TelA-like protein SAV1406 (378 aa).

Belongs to the TelA family.

The polypeptide is TelA-like protein SAV1406 (Staphylococcus aureus (strain Mu50 / ATCC 700699)).